The chain runs to 657 residues: Pentatricopeptide repeat-containing protein At5g44230 (657 aa).

12 PPR repeats span residues 45–79 (KELL…GLDQ), 80–112 (SCYI…VQFR), 113–147 (NPFL…EITP), 148–178 (VSFT…TFRL), 183–213 (FVYV…MPER), 214–244 (DVIS…LPTK), 245–279 (DMVA…GIRA), 280–314 (DEVT…GYSP), 317–347 (HVVI…MNNK), 348–383 (NVFT…EIKP), 384–419 (NTVT…GVQP), and 420–450 (TRDH…MSVE). Positions 455 to 530 (VWGALLGACR…TPAVSWVVDK (76 aa)) are type E motif. Residues 532–562 (GQMHKFFPGNLNHPMSNKIQDKLEELVERLT) form a type E(+) motif region. Positions 563 to 657 (VLGYQPDLSS…SGDCSCGDFW (95 aa)) are type DYW motif.

This sequence belongs to the PPR family. PCMP-H subfamily.

This is Pentatricopeptide repeat-containing protein At5g44230 (PCMP-H17) from Arabidopsis thaliana (Mouse-ear cress).